The primary structure comprises 156 residues: Zinc finger SWIM domain-containing protein 7 homolog (156 aa).

The SWIM-type zinc-finger motif lies at 82–120 (YMCLIQGDYCSCPSFNFSVLLKSDSVYCKHQISSILAEI).

Belongs to the SWS1 family.

The protein resides in the nucleus. In terms of biological role, may be involved in the homologous recombination repair (HRR) pathway of double-stranded DNA breaks arising during DNA replication or induced by DNA-damaging agents. This Dictyostelium discoideum (Social amoeba) protein is Zinc finger SWIM domain-containing protein 7 homolog (zswim7).